The sequence spans 317 residues: DNA repair nuclease/redox regulator APEX1 (317 aa).

A necessary for interaction with YBX1, binding to RNA, association together with NPM1 to rRNA, endoribonuclease activity on abasic RNA and localization in the nucleoli region spans residues 1–32; sequence MPKRGKRAAAEDGEEPKSEPETKKSKGAAKKT. The interval 1–57 is disordered; it reads MPKRGKRAAAEDGEEPKSEPETKKSKGAAKKTEKEAAGEGPVLYEDPPDQKTSASGK. Position 6 is an N6-acetyllysine; by EP300 (K6). The Nuclear localization signal (NLS) signature appears at 8–12; sequence AAAED. Over residues 15–37 the composition is skewed to basic and acidic residues; that stretch reads EPKSEPETKKSKGAAKKTEKEAA. A Phosphoserine modification is found at S18. The segment at 22–32 is necessary for interaction with NPM1 and for efficient rRNA binding; that stretch reads TKKSKGAAKKT. Residues K26, K30, K31, and K34 each carry the N6-acetyllysine modification. Residue S53 is modified to Phosphoserine. The short motif at 63–79 is the Nuclear export signal (NES) element; sequence ICSWNVDGLRAWIKKKG. An S-nitrosocysteine; alternate modification is found at C64. C64 and C92 are oxidised to a cystine. D69 serves as a coordination point for Mg(2+). Position 92 is an S-nitrosocysteine; alternate (C92). E95 contacts Mg(2+). Residue Y170 is part of the active site. Position 196 is an N6-acetyllysine (K196). D209 and N211 together coordinate Mg(2+). The Proton donor/acceptor role is filled by D209. The residue at position 232 (T232) is a Phosphothreonine; by CDK5. Residues 288 to 317 are mitochondrial targeting sequence (MTS); sequence HSLLPALCDSKIRSKALGSDHCPITLYLAL. D307 lines the Mg(2+) pocket. C309 bears the S-nitrosocysteine mark.

This sequence belongs to the DNA repair enzymes AP/ExoA family. Monomer. Homodimer; disulfide-linked. Component of the SET complex, composed of at least APEX1, SET, ANP32A, HMGB2, NME1 and TREX1. Associates with the dimer XRCC5/XRCC6 in a DNA-dependent manner. Interacts with SIRT1; the interaction is increased in the context of genotoxic stress. Interacts with HDAC1, HDAC2 and HDAC3; the interactions are not dependent on the APEX1 acetylation status. Interacts with XRCC1; the interaction is induced by SIRT1 and increased with the APEX1 acetylated form. Interacts with NPM1 (via N-terminal domain); the interaction is RNA-dependent and decreases in hydrogen peroxide-damaged cells. Interacts (via N-terminus) with YBX1 (via C-terminus); the interaction is increased in presence of APEX1 acetylated. Interacts with HNRNPL; the interaction is DNA-dependent. Interacts (via N-terminus) with KPNA1 and KPNA2. Interacts with TXN; the interaction stimulates the FOS/JUN AP-1 complex DNA-binding activity in a redox-dependent manner. Interacts with GZMA, KRT8, MDM2, POLB, PRDX6, PRPF19, RPLP0, TOMM20 and WDR77. Binds to CDK5. Requires Mg(2+) as cofactor. Mn(2+) serves as cofactor. Post-translationally, phosphorylated. Phosphorylation by kinase PKC or casein kinase CK2 results in enhanced redox activity that stimulates binding of the FOS/JUN AP-1 complex to its cognate binding site. AP-endodeoxyribonuclease activity is not affected by CK2-mediated phosphorylation. Phosphorylation of Thr-232 by CDK5 in response to MPP(+)/MPTP (1-methyl-4-phenylpyridinium) reduces AP-endodeoxyribonuclease activity resulting in accumulation of DNA damage and contributing to neuronal death. In terms of processing, acetylated on Lys-6. Acetylation is increased by the transcriptional coactivator EP300 acetyltransferase, genotoxic agents like H(2)O(2) and methyl methanesulfonate (MMS). Acetylation increases its binding affinity to the negative calcium response element (nCaRE) DNA promoter. The acetylated form induces a stronger binding of YBX1 to the Y-box sequence in the MDR1 promoter than the unacetylated form. Deacetylated on lysines. Lys-6 is deacetylated by SIRT1. Cleaved at Lys-30 by granzyme A to create the mitochondrial form; leading in reduction of binding to DNA, AP endodeoxyribonuclease activity, redox activation of transcription factors and to enhanced cell death. Cleaved by granzyme K; leading to intracellular ROS accumulation and enhanced cell death after oxidative stress. Post-translationally, cys-64 and Cys-92 are nitrosylated in response to nitric oxide (NO) and lead to the exposure of the nuclear export signal (NES). In terms of processing, ubiquitinated by MDM2; leading to translocation to the cytoplasm and proteasomal degradation.

It localises to the nucleus. It is found in the nucleolus. The protein resides in the nucleus speckle. The protein localises to the endoplasmic reticulum. Its subcellular location is the cytoplasm. It localises to the mitochondrion. The catalysed reaction is a deoxyribonucleotide-2'-deoxyribose-5'-monophosphate-DNA + H2O = a 5'-end 2'-deoxyribose-5'-monophosphate-DNA + a 3'-end 2'-deoxyribonucleotide-DNA + H(+). It carries out the reaction Exonucleolytic cleavage in the 3'- to 5'-direction to yield nucleoside 5'-phosphates.. The enzyme catalyses a 3'-end 2'-deoxyribonucleotide-3'-phosphoglycolate-DNA + H2O = 2-phosphoglycolate + a 3'-end 2'-deoxyribonucleotide-DNA + H(+). It catalyses the reaction a 3'-end 2'-deoxyribonucleotide-8-oxoguanine-DNA + H2O = 8-oxo-dGMP + a 3'-end 2'-deoxyribonucleotide-DNA + H(+). Its activity is regulated as follows. NPM1 stimulates endodeoxyribonuclease activity on double-stranded DNA with AP sites, but inhibits endoribonuclease activity on single-stranded RNA containing AP sites. Its function is as follows. Multifunctional protein that plays a central role in the cellular response to oxidative stress. The two major activities of APEX1 are DNA repair and redox regulation of transcriptional factors. Functions as an apurinic/apyrimidinic (AP) endodeoxyribonuclease in the base excision repair (BER) pathway of DNA lesions induced by oxidative and alkylating agents. Initiates repair of AP sites in DNA by catalyzing hydrolytic incision of the phosphodiester backbone immediately adjacent to the damage, generating a single-strand break with 5'-deoxyribose phosphate and 3'-hydroxyl ends. Also incises at AP sites in the DNA strand of DNA/RNA hybrids, single-stranded DNA regions of R-loop structures, and single-stranded RNA molecules. Operates at switch sites of immunoglobulin (Ig) constant regions where it mediates Ig isotype class switch recombination. Processes AP sites induced by successive action of AICDA and UNG. Generates staggered nicks in opposite DNA strands resulting in the formation of double-strand DNA breaks that are finally resolved via non-homologous end joining repair pathway. Has 3'-5' exodeoxyribonuclease activity on mismatched deoxyribonucleotides at the 3' termini of nicked or gapped DNA molecules during short-patch BER. Possesses DNA 3' phosphodiesterase activity capable of removing lesions (such as phosphoglycolate and 8-oxoguanine) blocking the 3' side of DNA strand breaks. Also acts as an endoribonuclease involved in the control of single-stranded RNA metabolism. Plays a role in regulating MYC mRNA turnover by preferentially cleaving in between UA and CA dinucleotides of the MYC coding region determinant (CRD). In association with NMD1, plays a role in the rRNA quality control process during cell cycle progression. Acts as a loading factor for POLB onto non-incised AP sites in DNA and stimulates the 5'-terminal deoxyribose 5'-phosphate (dRp) excision activity of POLB. Exerts reversible nuclear redox activity to regulate DNA binding affinity and transcriptional activity of transcriptional factors by controlling the redox status of their DNA-binding domain, such as the FOS/JUN AP-1 complex after exposure to IR. Involved in calcium-dependent down-regulation of parathyroid hormone (PTH) expression by binding to negative calcium response elements (nCaREs). Together with HNRNPL or the dimer XRCC5/XRCC6, associates with nCaRE, acting as an activator of transcriptional repression. May also play a role in the epigenetic regulation of gene expression by participating in DNA demethylation. Stimulates the YBX1-mediated MDR1 promoter activity, when acetylated at Lys-6 and Lys-7, leading to drug resistance. Plays a role in protection from granzyme-mediated cellular repair leading to cell death. Binds DNA and RNA. Associates, together with YBX1, on the MDR1 promoter. Together with NPM1, associates with rRNA. This Rattus norvegicus (Rat) protein is DNA repair nuclease/redox regulator APEX1 (Apex1).